Here is a 262-residue protein sequence, read N- to C-terminus: Acyl-[acyl-carrier-protein]--UDP-N-acetylglucosamine O-acyltransferase (262 aa).

It belongs to the transferase hexapeptide repeat family. LpxA subfamily. In terms of assembly, homotrimer.

It is found in the cytoplasm. It catalyses the reaction a (3R)-hydroxyacyl-[ACP] + UDP-N-acetyl-alpha-D-glucosamine = a UDP-3-O-[(3R)-3-hydroxyacyl]-N-acetyl-alpha-D-glucosamine + holo-[ACP]. It participates in glycolipid biosynthesis; lipid IV(A) biosynthesis; lipid IV(A) from (3R)-3-hydroxytetradecanoyl-[acyl-carrier-protein] and UDP-N-acetyl-alpha-D-glucosamine: step 1/6. In terms of biological role, involved in the biosynthesis of lipid A, a phosphorylated glycolipid that anchors the lipopolysaccharide to the outer membrane of the cell. In Escherichia coli O157:H7, this protein is Acyl-[acyl-carrier-protein]--UDP-N-acetylglucosamine O-acyltransferase.